The sequence spans 241 residues: Major prion protein (241 aa).

Positions 1–15 are cleaved as a signal peptide; sequence MLVLFVATWSDLGLC. The interaction with ADGRG6 stretch occupies residues 16–31; the sequence is KKRPKPGGWNTGGSRY. The tract at residues 16–223 is interaction with GRB2, ERI3 and SYN1; sequence KKRPKPGGWN…ESQAYYQRGS (208 aa). The interval 18 to 100 is disordered; that stretch reads RPKPGGWNTG…QWNKPSKPKT (83 aa). Tandem repeats lie at residues 44–52, 53–60, 61–68, 69–76, and 77–84. The tract at residues 44–84 is 5 X 8 AA tandem repeats of P-H-G-G-G-W-G-Q; it reads PQGGGSWGQPHGGGWGQPHGGGWGQPHGGGWGQPHGGGWGQ. The segment covering 45–88 has biased composition (gly residues); that stretch reads QGGGSWGQPHGGGWGQPHGGGWGQPHGGGWGQPHGGGWGQGGGT. Positions 54, 55, 56, 62, 63, 64, 70, 71, 72, 78, 79, and 80 each coordinate Cu(2+). C172 and C207 are joined by a disulfide. Residues N174 and N190 are each glycosylated (N-linked (GlcNAc...) asparagine). Residue S223 is the site of GPI-anchor amidated serine attachment. Residues 224–241 constitute a propeptide, removed in mature form; it reads SMVLFSSPPVILLISFLI.

Belongs to the prion family. As to quaternary structure, monomer and homodimer. Has a tendency to aggregate into amyloid fibrils containing a cross-beta spine, formed by a steric zipper of superposed beta-strands. Soluble oligomers may represent an intermediate stage on the path to fibril formation. Copper binding may promote oligomerization. Interacts with GRB2, APP, ERI3/PRNPIP and SYN1. Mislocalized cytosolically exposed PrP interacts with MGRN1; this interaction alters MGRN1 subcellular location and causes lysosomal enlargement. Interacts with APP. Interacts with KIAA1191. Interacts with ADGRG6.

It is found in the cell membrane. Its subcellular location is the golgi apparatus. Functionally, its primary physiological function is unclear. May play a role in neuronal development and synaptic plasticity. May be required for neuronal myelin sheath maintenance. May promote myelin homeostasis through acting as an agonist for ADGRG6 receptor. May play a role in iron uptake and iron homeostasis. Soluble oligomers are toxic to cultured neuroblastoma cells and induce apoptosis (in vitro). Association with GPC1 (via its heparan sulfate chains) targets PRNP to lipid rafts. Also provides Cu(2+) or Zn(2+) for the ascorbate-mediated GPC1 deaminase degradation of its heparan sulfate side chains. This Plecturocebus moloch (Dusky titi monkey) protein is Major prion protein (PRNP).